Here is a 328-residue protein sequence, read N- to C-terminus: GTP 3',8-cyclase (328 aa).

The Radical SAM core domain maps to 1-229 (MNQVDYLRIS…DAQVRGAGPA (229 aa)). Arg8 lines the GTP pocket. [4Fe-4S] cluster contacts are provided by Cys15 and Cys19. Tyr21 lines the S-adenosyl-L-methionine pocket. Cys22 serves as a coordination point for [4Fe-4S] cluster. Arg60 lines the GTP pocket. Position 64 (Gly64) interacts with S-adenosyl-L-methionine. Thr91 contacts GTP. Position 115 (Ser115) interacts with S-adenosyl-L-methionine. Lys155 contacts GTP. Residue Met189 participates in S-adenosyl-L-methionine binding. [4Fe-4S] cluster is bound by residues Cys252 and Cys255. Residue 257–259 (RMR) participates in GTP binding. A [4Fe-4S] cluster-binding site is contributed by Cys269.

Belongs to the radical SAM superfamily. MoaA family. Monomer and homodimer. [4Fe-4S] cluster serves as cofactor.

It catalyses the reaction GTP + AH2 + S-adenosyl-L-methionine = (8S)-3',8-cyclo-7,8-dihydroguanosine 5'-triphosphate + 5'-deoxyadenosine + L-methionine + A + H(+). It participates in cofactor biosynthesis; molybdopterin biosynthesis. Its function is as follows. Catalyzes the cyclization of GTP to (8S)-3',8-cyclo-7,8-dihydroguanosine 5'-triphosphate. In Nostoc sp. (strain PCC 7120 / SAG 25.82 / UTEX 2576), this protein is GTP 3',8-cyclase.